Consider the following 316-residue polypeptide: MNQLSALKQFSIIVADTSDIKSICKYQPEDATTNPSLILQAVSSNTNQNFVDQAVQYAKKKGGLYKDQIINASDKILVDLGIEILKKIPGYISSEVDARLSFSTEASILKAKKIIDLYEEQGISRNRVLIKLAATWECIKAAEELKKDSILCNLTLLFSFAQARACAESNVFLISPFVGRIYDWYISQNLLSKSFLGKDPGVISVCKIYEYYKKYGYKTIIMGASFRNIQQILYLSGCDRLTISPVLLKELESNTAKIDRNLAPPSFISVPPVALSEEEFRWEHNQDAMAVQKLSDGIRNFGKDQLRLEKIFSKKI.

Lys131 acts as the Schiff-base intermediate with substrate in catalysis.

The protein belongs to the transaldolase family. Type 1 subfamily. In terms of assembly, homodimer.

The protein resides in the cytoplasm. The enzyme catalyses D-sedoheptulose 7-phosphate + D-glyceraldehyde 3-phosphate = D-erythrose 4-phosphate + beta-D-fructose 6-phosphate. The protein operates within carbohydrate degradation; pentose phosphate pathway; D-glyceraldehyde 3-phosphate and beta-D-fructose 6-phosphate from D-ribose 5-phosphate and D-xylulose 5-phosphate (non-oxidative stage): step 2/3. Its function is as follows. Transaldolase is important for the balance of metabolites in the pentose-phosphate pathway. The protein is Transaldolase of Buchnera aphidicola subsp. Acyrthosiphon pisum (strain 5A).